A 68-amino-acid polypeptide reads, in one-letter code: Small ribosomal subunit protein bS21 (68 aa).

The tract at residues 35-68 (HYEKPSEKRARERAAAVRRARKMERKRMERDGIK) is disordered. Residues 37 to 49 (EKPSEKRARERAA) show a composition bias toward basic and acidic residues. Residues 50–59 (AVRRARKMER) show a composition bias toward basic residues.

Belongs to the bacterial ribosomal protein bS21 family.

This is Small ribosomal subunit protein bS21 from Sphingopyxis alaskensis (strain DSM 13593 / LMG 18877 / RB2256) (Sphingomonas alaskensis).